The following is a 116-amino-acid chain: Large ribosomal subunit protein bL17 (116 aa).

It belongs to the bacterial ribosomal protein bL17 family. Part of the 50S ribosomal subunit. Contacts protein L32.

The chain is Large ribosomal subunit protein bL17 from Rippkaea orientalis (strain PCC 8801 / RF-1) (Cyanothece sp. (strain PCC 8801)).